The primary structure comprises 482 residues: Probable cytosol aminopeptidase (482 aa).

Mn(2+)-binding residues include lysine 251 and aspartate 256. Lysine 263 is an active-site residue. Mn(2+)-binding residues include aspartate 274, aspartate 333, and glutamate 335. Residue arginine 337 is part of the active site.

It belongs to the peptidase M17 family. Requires Mn(2+) as cofactor.

Its subcellular location is the cytoplasm. It carries out the reaction Release of an N-terminal amino acid, Xaa-|-Yaa-, in which Xaa is preferably Leu, but may be other amino acids including Pro although not Arg or Lys, and Yaa may be Pro. Amino acid amides and methyl esters are also readily hydrolyzed, but rates on arylamides are exceedingly low.. It catalyses the reaction Release of an N-terminal amino acid, preferentially leucine, but not glutamic or aspartic acids.. Its function is as follows. Presumably involved in the processing and regular turnover of intracellular proteins. Catalyzes the removal of unsubstituted N-terminal amino acids from various peptides. This Acinetobacter baumannii (strain SDF) protein is Probable cytosol aminopeptidase.